The sequence spans 239 residues: 1-(5-phosphoribosyl)-5-[(5-phosphoribosylamino)methylideneamino] imidazole-4-carboxamide isomerase (239 aa).

Asp8 serves as the catalytic Proton acceptor. Catalysis depends on Asp129, which acts as the Proton donor.

The protein belongs to the HisA/HisF family.

The protein localises to the cytoplasm. It catalyses the reaction 1-(5-phospho-beta-D-ribosyl)-5-[(5-phospho-beta-D-ribosylamino)methylideneamino]imidazole-4-carboxamide = 5-[(5-phospho-1-deoxy-D-ribulos-1-ylimino)methylamino]-1-(5-phospho-beta-D-ribosyl)imidazole-4-carboxamide. It functions in the pathway amino-acid biosynthesis; L-histidine biosynthesis; L-histidine from 5-phospho-alpha-D-ribose 1-diphosphate: step 4/9. In Cereibacter sphaeroides (strain ATCC 17029 / ATH 2.4.9) (Rhodobacter sphaeroides), this protein is 1-(5-phosphoribosyl)-5-[(5-phosphoribosylamino)methylideneamino] imidazole-4-carboxamide isomerase.